The primary structure comprises 847 residues: Vacuolar membrane protease (847 aa).

Residues methionine 1–lysine 17 lie on the Cytoplasmic side of the membrane. The chain crosses the membrane as a helical span at residues serine 18–tryptophan 38. Over lysine 39 to leucine 348 the chain is Vacuolar. The Zn(2+) site is built by histidine 146 and aspartate 158. Glutamate 190 acts as the Proton acceptor in catalysis. Glutamate 191 is a Zn(2+) binding site. Asparagine 208 carries N-linked (GlcNAc...) asparagine glycosylation. Glutamate 216 serves as a coordination point for Zn(2+). A glycan (N-linked (GlcNAc...) asparagine) is linked at asparagine 274. Histidine 291 contacts Zn(2+). A helical transmembrane segment spans residues histidine 349–phenylalanine 369. Over arginine 370–proline 381 the chain is Cytoplasmic. A helical transmembrane segment spans residues cysteine 382–valine 402. The Vacuolar segment spans residues glutamine 403–serine 415. The chain crosses the membrane as a helical span at residues serine 416–phenylalanine 436. Topologically, residues arginine 437 to glutamate 454 are cytoplasmic. A helical transmembrane segment spans residues isoleucine 455 to threonine 475. Over serine 476–glycine 482 the chain is Vacuolar. The helical transmembrane segment at serine 483–isoleucine 503 threads the bilayer. Residues arginine 504–asparagine 560 lie on the Cytoplasmic side of the membrane. A helical transmembrane segment spans residues leucine 561–leucine 581. Residues leucine 582–lysine 605 lie on the Vacuolar side of the membrane. Residues phenylalanine 606–leucine 626 traverse the membrane as a helical segment. Residues serine 627–serine 630 are Cytoplasmic-facing. The helical transmembrane segment at serine 631–phenylalanine 651 threads the bilayer. Residues asparagine 652 to methionine 847 are Vacuolar-facing. 4 N-linked (GlcNAc...) asparagine glycosylation sites follow: asparagine 726, asparagine 734, asparagine 800, and asparagine 834.

The protein belongs to the peptidase M28 family. Zn(2+) is required as a cofactor.

It is found in the vacuole membrane. May be involved in vacuolar sorting and osmoregulation. The protein is Vacuolar membrane protease of Schizosaccharomyces japonicus (strain yFS275 / FY16936) (Fission yeast).